The sequence spans 770 residues: Probable copper-exporting P-type ATPase V (770 aa).

The 66-residue stretch at 1-66 (MRVCVTGFNV…AITKAQHVPA (66 aa)) folds into the HMA domain. The tract at residues 103 to 130 (DKPLKASRCGGRPRGPVRGSASWPGEQN) is disordered. Positions 110 to 121 (RCGGRPRGPVRG) are enriched in low complexity. Helical transmembrane passes span 141–161 (VWLALPLGLLALGSSMFFGAY), 164–184 (AGWLAFAATLPVQFVAGWPIL), 193–213 (ALTSNMDTLIALGTLTAFVYS), 217–237 (LFAGGPLFFDTSALIIAFVVL), 377–397 (AVFVPAVIGVAVATFAGWTLI), and 402–422 (VAGMTAAVAVLIIACPCALGL). Aspartate 460 serves as the catalytic 4-aspartylphosphate intermediate. Residues aspartate 660 and aspartate 664 each coordinate Mg(2+). Helical transmembrane passes span 718–737 (LGWAFGYNTAAIPLAALGAL) and 741–760 (VAGAAMGFSSVSVVTNSLRL).

This sequence belongs to the cation transport ATPase (P-type) (TC 3.A.3) family. Type IB subfamily.

The protein localises to the cell membrane. It carries out the reaction Cu(+)(in) + ATP + H2O = Cu(+)(out) + ADP + phosphate + H(+). In terms of biological role, necessary for copper homeostasis and likely functions as a copper exporter. Also required for full virulence. This chain is Probable copper-exporting P-type ATPase V (ctpV), found in Mycobacterium tuberculosis (strain CDC 1551 / Oshkosh).